A 231-amino-acid chain; its full sequence is Ion-translocating oxidoreductase complex subunit E (231 aa).

The next 6 membrane-spanning stretches (helical) occupy residues 18 to 38, 39 to 59, 63 to 83, 86 to 106, 125 to 145, and 182 to 202; these read ALVQLLGLCPLLAVTSTATNA, LGLGLATTLVLTLTNLTISTL, TPSEIRIPIYVMIIASVVSAV, LINAYAFGLYQSLGIFIPLIV, ALSALDGFSIGMGATCAMFVL, and PFLLAMLPPGAFIGLGLMLAG.

It belongs to the NqrDE/RnfAE family. In terms of assembly, the complex is composed of six subunits: RsxA, RsxB, RsxC, RsxD, RsxE and RsxG.

The protein localises to the cell inner membrane. In terms of biological role, part of a membrane-bound complex that couples electron transfer with translocation of ions across the membrane. Required to maintain the reduced state of SoxR. The sequence is that of Ion-translocating oxidoreductase complex subunit E from Escherichia coli O6:K15:H31 (strain 536 / UPEC).